Consider the following 76-residue polypeptide: Translational regulator CsrA (76 aa).

Belongs to the CsrA/RsmA family. In terms of assembly, homodimer; the beta-strands of each monomer intercalate to form a hydrophobic core, while the alpha-helices form wings that extend away from the core.

The protein resides in the cytoplasm. In terms of biological role, a translational regulator that binds mRNA to regulate translation initiation and/or mRNA stability. Usually binds in the 5'-UTR at or near the Shine-Dalgarno sequence preventing ribosome-binding, thus repressing translation. Its main target seems to be the major flagellin gene, while its function is anatagonized by FliW. This Pseudothermotoga lettingae (strain ATCC BAA-301 / DSM 14385 / NBRC 107922 / TMO) (Thermotoga lettingae) protein is Translational regulator CsrA.